A 63-amino-acid polypeptide reads, in one-letter code: Small ribosomal subunit protein bS21 (63 aa).

It belongs to the bacterial ribosomal protein bS21 family.

The polypeptide is Small ribosomal subunit protein bS21 (Porphyromonas gingivalis (strain ATCC BAA-308 / W83)).